Reading from the N-terminus, the 379-residue chain is Queuine tRNA-ribosyltransferase (379 aa).

Catalysis depends on Asp-94, which acts as the Proton acceptor. Residues 94–98 (DSGGF), Asp-148, Gln-191, and Gly-218 each bind substrate. The tract at residues 249 to 255 (GVGSPDA) is RNA binding. Asp-268 functions as the Nucleophile in the catalytic mechanism. Residues 273–277 (TRIAR) are RNA binding; important for wobble base 34 recognition. 4 residues coordinate Zn(2+): Cys-306, Cys-308, Cys-311, and His-337.

Belongs to the queuine tRNA-ribosyltransferase family. Homodimer. Within each dimer, one monomer is responsible for RNA recognition and catalysis, while the other monomer binds to the replacement base PreQ1. The cofactor is Zn(2+).

It catalyses the reaction 7-aminomethyl-7-carbaguanine + guanosine(34) in tRNA = 7-aminomethyl-7-carbaguanosine(34) in tRNA + guanine. Its pathway is tRNA modification; tRNA-queuosine biosynthesis. Functionally, catalyzes the base-exchange of a guanine (G) residue with the queuine precursor 7-aminomethyl-7-deazaguanine (PreQ1) at position 34 (anticodon wobble position) in tRNAs with GU(N) anticodons (tRNA-Asp, -Asn, -His and -Tyr). Catalysis occurs through a double-displacement mechanism. The nucleophile active site attacks the C1' of nucleotide 34 to detach the guanine base from the RNA, forming a covalent enzyme-RNA intermediate. The proton acceptor active site deprotonates the incoming PreQ1, allowing a nucleophilic attack on the C1' of the ribose to form the product. After dissociation, two additional enzymatic reactions on the tRNA convert PreQ1 to queuine (Q), resulting in the hypermodified nucleoside queuosine (7-(((4,5-cis-dihydroxy-2-cyclopenten-1-yl)amino)methyl)-7-deazaguanosine). This chain is Queuine tRNA-ribosyltransferase, found in Macrococcus caseolyticus (strain JCSC5402) (Macrococcoides caseolyticum).